The primary structure comprises 360 residues: MSDLSTLRQSYLDRISAAADGDALEQVRLAALGKKGEISGMMKELGRMTPEERQTTGAALNRLKDEIDAALRARKQGLEDAALDARLKEEWLDVTLPGRPRPQGTIHPISQVTEEVTAIFADMGFRVAEGPQIESDWFNFDALNIPPEHPARQEHDTFFMARAGDDPRPPQVLRTHTSPVQIRAMQATGAPIRVICPGRVYRMDMDQTHTPMFHQVEGLALGKDISMANLKWTLEEFCRAFFEVDEVELRFRASHFPFTEPSAEVDIRCSWEGGKLTIGQGESWLEILGSGMVHPKVLAAGGIDPEQWQGFAFGMGIDRIAMLKYGIPDLRAFFESDLRWLRHYGFAAGDVPSVAGGLSR.

Residue Glu-260 coordinates Mg(2+).

Belongs to the class-II aminoacyl-tRNA synthetase family. Phe-tRNA synthetase alpha subunit type 1 subfamily. As to quaternary structure, tetramer of two alpha and two beta subunits. Mg(2+) is required as a cofactor.

The protein resides in the cytoplasm. It catalyses the reaction tRNA(Phe) + L-phenylalanine + ATP = L-phenylalanyl-tRNA(Phe) + AMP + diphosphate + H(+). This is Phenylalanine--tRNA ligase alpha subunit from Paracoccus denitrificans (strain Pd 1222).